A 503-amino-acid polypeptide reads, in one-letter code: GMP synthase [glutamine-hydrolyzing] (503 aa).

Positions 1-178 (MREANVYSEI…LHRAAGIPAD (178 aa)) constitute a Glutamine amidotransferase type-1 domain. C60 (nucleophile) is an active-site residue. Active-site residues include H152 and E154. The region spanning 179–377 (WNSGNVIADQ…LGLPEVIVGR (199 aa)) is the GMPS ATP-PPase domain. An ATP-binding site is contributed by 206–212 (SGGVDSA).

In terms of assembly, homodimer.

The catalysed reaction is XMP + L-glutamine + ATP + H2O = GMP + L-glutamate + AMP + diphosphate + 2 H(+). The protein operates within purine metabolism; GMP biosynthesis; GMP from XMP (L-Gln route): step 1/1. Its function is as follows. Catalyzes the synthesis of GMP from XMP. This chain is GMP synthase [glutamine-hydrolyzing], found in Leifsonia xyli subsp. xyli (strain CTCB07).